A 189-amino-acid chain; its full sequence is Large ribosomal subunit protein bL9 (189 aa).

It belongs to the bacterial ribosomal protein bL9 family.

In terms of biological role, binds to the 23S rRNA. This chain is Large ribosomal subunit protein bL9, found in Beijerinckia indica subsp. indica (strain ATCC 9039 / DSM 1715 / NCIMB 8712).